We begin with the raw amino-acid sequence, 264 residues long: Thiazole synthase (264 aa).

Lys106 serves as the catalytic Schiff-base intermediate with DXP. Residues Gly167, Ala193 to Gly194, and Asn215 to Ser216 each bind 1-deoxy-D-xylulose 5-phosphate.

The protein belongs to the ThiG family. As to quaternary structure, homotetramer. Forms heterodimers with either ThiH or ThiS.

It is found in the cytoplasm. The catalysed reaction is [ThiS sulfur-carrier protein]-C-terminal-Gly-aminoethanethioate + 2-iminoacetate + 1-deoxy-D-xylulose 5-phosphate = [ThiS sulfur-carrier protein]-C-terminal Gly-Gly + 2-[(2R,5Z)-2-carboxy-4-methylthiazol-5(2H)-ylidene]ethyl phosphate + 2 H2O + H(+). It participates in cofactor biosynthesis; thiamine diphosphate biosynthesis. Catalyzes the rearrangement of 1-deoxy-D-xylulose 5-phosphate (DXP) to produce the thiazole phosphate moiety of thiamine. Sulfur is provided by the thiocarboxylate moiety of the carrier protein ThiS. In vitro, sulfur can be provided by H(2)S. The chain is Thiazole synthase from Stutzerimonas stutzeri (strain A1501) (Pseudomonas stutzeri).